We begin with the raw amino-acid sequence, 482 residues long: Ribulose bisphosphate carboxylase large chain (482 aa).

A propeptide spanning residues 1–2 is cleaved from the precursor; the sequence is MS. Pro-3 is modified (N-acetylproline). Lys-14 is modified (N6,N6,N6-trimethyllysine). Substrate is bound by residues Asn-123 and Thr-173. Lys-175 serves as the catalytic Proton acceptor. Residue Lys-177 coordinates substrate. The Mg(2+) site is built by Lys-201, Asp-203, and Glu-204. Lys-201 is modified (N6-carboxylysine). His-294 (proton acceptor) is an active-site residue. The substrate site is built by Arg-295, His-327, and Ser-379.

Belongs to the RuBisCO large chain family. Type I subfamily. In terms of assembly, heterohexadecamer of 8 large chains and 8 small chains; disulfide-linked. The disulfide link is formed within the large subunit homodimers. Mg(2+) is required as a cofactor. The disulfide bond which can form in the large chain dimeric partners within the hexadecamer appears to be associated with oxidative stress and protein turnover.

It localises to the plastid. It is found in the chloroplast. It catalyses the reaction 2 (2R)-3-phosphoglycerate + 2 H(+) = D-ribulose 1,5-bisphosphate + CO2 + H2O. It carries out the reaction D-ribulose 1,5-bisphosphate + O2 = 2-phosphoglycolate + (2R)-3-phosphoglycerate + 2 H(+). Functionally, ruBisCO catalyzes two reactions: the carboxylation of D-ribulose 1,5-bisphosphate, the primary event in carbon dioxide fixation, as well as the oxidative fragmentation of the pentose substrate in the photorespiration process. Both reactions occur simultaneously and in competition at the same active site. The sequence is that of Ribulose bisphosphate carboxylase large chain from Stegnosperma halimifolium.